The chain runs to 173 residues: Translation initiation factor IF-3 (173 aa).

The protein belongs to the IF-3 family. In terms of assembly, monomer.

It localises to the cytoplasm. Its function is as follows. IF-3 binds to the 30S ribosomal subunit and shifts the equilibrium between 70S ribosomes and their 50S and 30S subunits in favor of the free subunits, thus enhancing the availability of 30S subunits on which protein synthesis initiation begins. This chain is Translation initiation factor IF-3, found in Enterococcus faecalis (strain ATCC 700802 / V583).